Reading from the N-terminus, the 403-residue chain is Nodal homolog (403 aa).

The N-terminal stretch at 1–18 (MAFLTAVLCFGFACMVQG) is a signal peptide. The propeptide occupies 19–278 (VPSWLESRIP…RMPGIRRHRR (260 aa)). Asn68, Asn133, and Asn169 each carry an N-linked (GlcNAc...) asparagine glycan. The disordered stretch occupies residues 195 to 220 (AERGSGMSSAEFLDSPGDSPQYNPHH). Cystine bridges form between Cys303-Cys369, Cys332-Cys400, and Cys336-Cys402. N-linked (GlcNAc...) asparagine glycosylation is present at Asn341.

Belongs to the TGF-beta family. As to quaternary structure, homodimer; disulfide-linked. Interacts with, and is inhibited by cer1 and gdf10/bmp3b.

The protein localises to the secreted. In terms of biological role, cooperation and regulatory loops of multiple nodals are essential for mesendoderm patterning in early embryos. Essential for mesoderm formation and axial patterning during embryonic development. Activates the activin-like signaling pathway to induce dorsal and ventral mesoderm in animal cap ectoderm. In addition, also dorsalizes ventral marginal zone (VMZ) tissues during gastrulation. Acts in a downstream signaling cascade via cripto and cer1 to mediate cardiogenesis in embryonic mesoderm. Directs the orientation of the left-right axis by driving the left-specific gene cascade in the left lateral plate mesoderm. The chain is Nodal homolog from Xenopus tropicalis (Western clawed frog).